The following is a 221-amino-acid chain: Octanoyltransferase (221 aa).

Positions 38–220 (GEIPDTLLLL…GFREVLGDPG (183 aa)) constitute a BPL/LPL catalytic domain. Substrate is bound by residues 84 to 91 (RGGDATFH), 149 to 151 (AIG), and 163 to 165 (GFA). C181 serves as the catalytic Acyl-thioester intermediate.

The protein belongs to the LipB family.

It localises to the cytoplasm. It catalyses the reaction octanoyl-[ACP] + L-lysyl-[protein] = N(6)-octanoyl-L-lysyl-[protein] + holo-[ACP] + H(+). It functions in the pathway protein modification; protein lipoylation via endogenous pathway; protein N(6)-(lipoyl)lysine from octanoyl-[acyl-carrier-protein]: step 1/2. In terms of biological role, catalyzes the transfer of endogenously produced octanoic acid from octanoyl-acyl-carrier-protein onto the lipoyl domains of lipoate-dependent enzymes. Lipoyl-ACP can also act as a substrate although octanoyl-ACP is likely to be the physiological substrate. This chain is Octanoyltransferase, found in Rubrobacter xylanophilus (strain DSM 9941 / JCM 11954 / NBRC 16129 / PRD-1).